Reading from the N-terminus, the 304-residue chain is Pyridoxal 5'-phosphate synthase subunit pyroA (304 aa).

Asp28 serves as a coordination point for D-ribose 5-phosphate. Lys85 acts as the Schiff-base intermediate with D-ribose 5-phosphate in catalysis. Residue Gly157 coordinates D-ribose 5-phosphate. Arg169 provides a ligand contact to D-glyceraldehyde 3-phosphate. D-ribose 5-phosphate contacts are provided by residues Gly224 and 245 to 246 (GS).

It belongs to the PdxS/SNZ family.

It carries out the reaction aldehydo-D-ribose 5-phosphate + D-glyceraldehyde 3-phosphate + L-glutamine = pyridoxal 5'-phosphate + L-glutamate + phosphate + 3 H2O + H(+). Its pathway is cofactor biosynthesis; pyridoxal 5'-phosphate biosynthesis. Its function is as follows. Catalyzes the formation of pyridoxal 5'-phosphate from ribose 5-phosphate (RBP), glyceraldehyde 3-phosphate (G3P) and ammonia. The ammonia is provided by PDX2. Can also use ribulose 5-phosphate and dihydroxyacetone phosphate as substrates, resulting from enzyme-catalyzed isomerization of RBP and G3P, respectively. Also plays an indirect role in resistance to singlet oxygen-generating photosensitizers. The protein is Pyridoxal 5'-phosphate synthase subunit pyroA (pyroA) of Emericella nidulans (strain FGSC A4 / ATCC 38163 / CBS 112.46 / NRRL 194 / M139) (Aspergillus nidulans).